Reading from the N-terminus, the 280-residue chain is Acetyl-coenzyme A carboxylase carboxyl transferase subunit beta (280 aa).

The 253-residue stretch at 28–280 (LFLACPYCGA…IVRLHTAEAE (253 aa)) folds into the CoA carboxyltransferase N-terminal domain. Residues cysteine 32, cysteine 35, cysteine 50, and cysteine 53 each coordinate Zn(2+). The segment at 32-53 (CPYCGAQMYNKQLGKYRVCAKC) adopts a C4-type zinc-finger fold.

Belongs to the AccD/PCCB family. Acetyl-CoA carboxylase is a heterohexamer composed of biotin carboxyl carrier protein (AccB), biotin carboxylase (AccC) and two subunits each of ACCase subunit alpha (AccA) and ACCase subunit beta (AccD). Requires Zn(2+) as cofactor.

It is found in the cytoplasm. It carries out the reaction N(6)-carboxybiotinyl-L-lysyl-[protein] + acetyl-CoA = N(6)-biotinyl-L-lysyl-[protein] + malonyl-CoA. The protein operates within lipid metabolism; malonyl-CoA biosynthesis; malonyl-CoA from acetyl-CoA: step 1/1. Its function is as follows. Component of the acetyl coenzyme A carboxylase (ACC) complex. Biotin carboxylase (BC) catalyzes the carboxylation of biotin on its carrier protein (BCCP) and then the CO(2) group is transferred by the transcarboxylase to acetyl-CoA to form malonyl-CoA. In Leuconostoc mesenteroides subsp. mesenteroides (strain ATCC 8293 / DSM 20343 / BCRC 11652 / CCM 1803 / JCM 6124 / NCDO 523 / NBRC 100496 / NCIMB 8023 / NCTC 12954 / NRRL B-1118 / 37Y), this protein is Acetyl-coenzyme A carboxylase carboxyl transferase subunit beta.